The primary structure comprises 224 residues: Octanoyltransferase (224 aa).

The 196-residue stretch at 29 to 224 (EATPDALWIC…GQKLATYLAP (196 aa)) folds into the BPL/LPL catalytic domain. Substrate-binding positions include 68-75 (RGGQVTFH), 157-159 (ALG), and 170-172 (GVA). Residue cysteine 188 is the Acyl-thioester intermediate of the active site.

The protein belongs to the LipB family.

The protein resides in the cytoplasm. The catalysed reaction is octanoyl-[ACP] + L-lysyl-[protein] = N(6)-octanoyl-L-lysyl-[protein] + holo-[ACP] + H(+). It functions in the pathway protein modification; protein lipoylation via endogenous pathway; protein N(6)-(lipoyl)lysine from octanoyl-[acyl-carrier-protein]: step 1/2. Functionally, catalyzes the transfer of endogenously produced octanoic acid from octanoyl-acyl-carrier-protein onto the lipoyl domains of lipoate-dependent enzymes. Lipoyl-ACP can also act as a substrate although octanoyl-ACP is likely to be the physiological substrate. This Polaromonas naphthalenivorans (strain CJ2) protein is Octanoyltransferase.